The chain runs to 143 residues: Large ribosomal subunit protein uL11 (143 aa).

Belongs to the universal ribosomal protein uL11 family. As to quaternary structure, part of the ribosomal stalk of the 50S ribosomal subunit. Interacts with L10 and the large rRNA to form the base of the stalk. L10 forms an elongated spine to which L12 dimers bind in a sequential fashion forming a multimeric L10(L12)X complex. One or more lysine residues are methylated.

Functionally, forms part of the ribosomal stalk which helps the ribosome interact with GTP-bound translation factors. In Rhizobium rhizogenes (strain K84 / ATCC BAA-868) (Agrobacterium radiobacter), this protein is Large ribosomal subunit protein uL11.